Reading from the N-terminus, the 472-residue chain is Argininosuccinate lyase (472 aa).

The protein belongs to the lyase 1 family. Argininosuccinate lyase subfamily.

The protein localises to the cytoplasm. The catalysed reaction is 2-(N(omega)-L-arginino)succinate = fumarate + L-arginine. It participates in amino-acid biosynthesis; L-arginine biosynthesis; L-arginine from L-ornithine and carbamoyl phosphate: step 3/3. The chain is Argininosuccinate lyase from Synechococcus sp. (strain CC9311).